The primary structure comprises 247 residues: 2,3-bisphosphoglycerate-dependent phosphoglycerate mutase (247 aa).

Substrate contacts are provided by residues 8–15 (RHGESQWN), 21–22 (TG), Arg60, 87–90 (ERHY), Lys98, 114–115 (RR), and 183–184 (GN). His9 functions as the Tele-phosphohistidine intermediate in the catalytic mechanism. The active-site Proton donor/acceptor is the Glu87.

The protein belongs to the phosphoglycerate mutase family. BPG-dependent PGAM subfamily.

The catalysed reaction is (2R)-2-phosphoglycerate = (2R)-3-phosphoglycerate. It participates in carbohydrate degradation; glycolysis; pyruvate from D-glyceraldehyde 3-phosphate: step 3/5. Catalyzes the interconversion of 2-phosphoglycerate and 3-phosphoglycerate. The polypeptide is 2,3-bisphosphoglycerate-dependent phosphoglycerate mutase (Chlorobium phaeobacteroides (strain DSM 266 / SMG 266 / 2430)).